The chain runs to 316 residues: Epoxide hydrolase 3 (316 aa).

Positions 25–302 constitute an AB hydrolase-1 domain; sequence PVVLLLHGFP…ACHFINQERP (278 aa). Catalysis depends on Asp-101, which acts as the Nucleophile. Residue Tyr-150 participates in an epoxide binding. Residue Tyr-230 is the Proton donor of the active site. His-295 (proton acceptor) is an active-site residue.

This sequence belongs to the AB hydrolase superfamily. Epoxide hydrolase family. As to quaternary structure, homodimer. In terms of tissue distribution, highly expressed in young fruits 15 days after anthesis (15-DAA).

It catalyses the reaction an epoxide + H2O = an ethanediol. The catalysed reaction is (24S)-24,25-epoxycucurbitadienol + H2O = (24R)-24,25-dihydroxycucurbitadienol. It functions in the pathway secondary metabolite biosynthesis; terpenoid biosynthesis. Its function is as follows. Epoxide hydrolase involved in the biosynthesis of cucurbitacin and mogroside tetracyclic triterpene natural products (e.g. siamenoside I and mogrosides IV, V and VI). Cucurbitacins have cytotoxic properties and exhibit deterrent taste as a defense barrier against herbivores. Mogrosides are nonsugar highly oxygenated compounds used as high-intensity zero-calorie sweeteners; they also possess pharmacological properties such as regulating immunity, lowering blood sugar and lipid levels, protecting the liver, and acting as antioxidants and antitumor agents. Catalyzes the hydrolysis of aromatic epoxide-containing substrates, such as the conversion of 24,25-epoxycucurbitadienol to 24,25-dihydroxycucurbitadienol. This Siraitia grosvenorii (Monk's fruit) protein is Epoxide hydrolase 3.